A 182-amino-acid chain; its full sequence is Large ribosomal subunit protein uL16 (182 aa).

This sequence belongs to the universal ribosomal protein uL16 family.

The chain is Large ribosomal subunit protein uL16 from Thermococcus onnurineus (strain NA1).